Consider the following 650-residue polypeptide: Macrolide export ATP-binding/permease protein MacB (650 aa).

The 239-residue stretch at 5–243 (LELKDIRRSY…AGGTEPVVNT (239 aa)) folds into the ABC transporter domain. An ATP-binding site is contributed by 41-48 (GASGSGKS). 5 helical membrane-spanning segments follow: residues 273-293 (LLTMLGIIIGIASVVSIVVVG), 523-543 (LFLTLVAVISLVVGGIGVMNI), 554-574 (ANDIPMDVGAGASYVLYHLFF), 580-600 (VLPAVGGALGITLSLLIAFTL), and 613-633 (PLALLLAFLCSTVTGILFGWL).

It belongs to the ABC transporter superfamily. Macrolide exporter (TC 3.A.1.122) family. In terms of assembly, homodimer. Part of the tripartite efflux system MacAB-TolC, which is composed of an inner membrane transporter, MacB, a periplasmic membrane fusion protein, MacA, and an outer membrane component, TolC. The complex forms a large protein conduit and can translocate molecules across both the inner and outer membranes. Interacts with MacA.

Its subcellular location is the cell inner membrane. Part of the tripartite efflux system MacAB-TolC. MacB is a non-canonical ABC transporter that contains transmembrane domains (TMD), which form a pore in the inner membrane, and an ATP-binding domain (NBD), which is responsible for energy generation. Confers resistance against macrolides. This Shigella dysenteriae serotype 1 (strain Sd197) protein is Macrolide export ATP-binding/permease protein MacB.